The primary structure comprises 85 residues: Small ribosomal subunit protein uS17 (85 aa).

The protein belongs to the universal ribosomal protein uS17 family. In terms of assembly, part of the 30S ribosomal subunit.

Functionally, one of the primary rRNA binding proteins, it binds specifically to the 5'-end of 16S ribosomal RNA. In Acinetobacter baumannii (strain AB307-0294), this protein is Small ribosomal subunit protein uS17.